The sequence spans 317 residues: tRNA dimethylallyltransferase (317 aa).

14-21 contributes to the ATP binding site; it reads GPTAVGKT. A substrate-binding site is contributed by 16 to 21; the sequence is TAVGKT. The interval 39–42 is interaction with substrate tRNA; sequence DSMQ.

It belongs to the IPP transferase family. In terms of assembly, monomer. Requires Mg(2+) as cofactor.

It carries out the reaction adenosine(37) in tRNA + dimethylallyl diphosphate = N(6)-dimethylallyladenosine(37) in tRNA + diphosphate. Functionally, catalyzes the transfer of a dimethylallyl group onto the adenine at position 37 in tRNAs that read codons beginning with uridine, leading to the formation of N6-(dimethylallyl)adenosine (i(6)A). In Bacillus thuringiensis subsp. konkukian (strain 97-27), this protein is tRNA dimethylallyltransferase.